A 171-amino-acid polypeptide reads, in one-letter code: MFDIGFSELLLVFIIGLVVLGPQRLPVAVKTVAGWIRALRSLATTVQNELTQELKLQEFQDSLKKVEKASLTSLTPELKASMDELRQAAESMKRSYVANDPEKASDEAHTIHNPVVKDNETAHEGVTPAAAQTQASSPEQKPETTPEPVVKPAADAEPKTAAPSPSSSDKP.

Residues 1-21 (MFDIGFSELLLVFIIGLVVLG) traverse the membrane as a helical segment. The disordered stretch occupies residues 89 to 171 (AESMKRSYVA…APSPSSSDKP (83 aa)). The span at 100-123 (DPEKASDEAHTIHNPVVKDNETAH) shows a compositional bias: basic and acidic residues. Over residues 130–139 (AAQTQASSPE) the composition is skewed to polar residues.

Belongs to the TatB family. As to quaternary structure, the Tat system comprises two distinct complexes: a TatABC complex, containing multiple copies of TatA, TatB and TatC subunits, and a separate TatA complex, containing only TatA subunits. Substrates initially bind to the TatABC complex, which probably triggers association of the separate TatA complex to form the active translocon.

Its subcellular location is the cell inner membrane. In terms of biological role, part of the twin-arginine translocation (Tat) system that transports large folded proteins containing a characteristic twin-arginine motif in their signal peptide across membranes. Together with TatC, TatB is part of a receptor directly interacting with Tat signal peptides. TatB may form an oligomeric binding site that transiently accommodates folded Tat precursor proteins before their translocation. The protein is Sec-independent protein translocase protein TatB of Escherichia coli O1:K1 / APEC.